The following is a 360-amino-acid chain: Probable mannan endo-1,4-beta-mannosidase A (360 aa).

An N-terminal signal peptide occupies residues 1-18 (MKLSQILTFASLLSGALA). Positions 142 and 178 each coordinate substrate. Residue glutamate 179 is the Proton donor of the active site. Tyrosine 254 lines the substrate pocket. The Nucleophile role is filled by glutamate 287. Asparagine 307 is a glycosylation site (N-linked (GlcNAc...) asparagine). Tryptophan 317 contacts substrate.

This sequence belongs to the glycosyl hydrolase 5 (cellulase A) family.

The protein localises to the secreted. The catalysed reaction is Random hydrolysis of (1-&gt;4)-beta-D-mannosidic linkages in mannans, galactomannans and glucomannans.. Its function is as follows. Endo-1,4-mannanase, a crucial enzyme for depolymerization of seed galactomannans and wood galactoglucomannans. This chain is Probable mannan endo-1,4-beta-mannosidase A (manA), found in Aspergillus clavatus (strain ATCC 1007 / CBS 513.65 / DSM 816 / NCTC 3887 / NRRL 1 / QM 1276 / 107).